A 663-amino-acid polypeptide reads, in one-letter code: 4-hydroxy-3-methylbut-2-en-1-yl diphosphate synthase (flavodoxin) (663 aa).

[4Fe-4S] cluster is bound by residues Cys568, Cys571, Cys602, and Glu609.

This sequence belongs to the IspG family. It depends on [4Fe-4S] cluster as a cofactor.

The catalysed reaction is (2E)-4-hydroxy-3-methylbut-2-enyl diphosphate + oxidized [flavodoxin] + H2O + 2 H(+) = 2-C-methyl-D-erythritol 2,4-cyclic diphosphate + reduced [flavodoxin]. Its pathway is isoprenoid biosynthesis; isopentenyl diphosphate biosynthesis via DXP pathway; isopentenyl diphosphate from 1-deoxy-D-xylulose 5-phosphate: step 5/6. Functionally, converts 2C-methyl-D-erythritol 2,4-cyclodiphosphate (ME-2,4cPP) into 1-hydroxy-2-methyl-2-(E)-butenyl 4-diphosphate. In Leptospira borgpetersenii serovar Hardjo-bovis (strain JB197), this protein is 4-hydroxy-3-methylbut-2-en-1-yl diphosphate synthase (flavodoxin).